The chain runs to 253 residues: uncharacterized protein (253 aa).

Residue G7–T14 participates in ATP binding.

This sequence to M.jannaschii MJ0084 and MJ0823.

This is an uncharacterized protein from Methanocaldococcus jannaschii (strain ATCC 43067 / DSM 2661 / JAL-1 / JCM 10045 / NBRC 100440) (Methanococcus jannaschii).